The sequence spans 254 residues: MANLGYWLLALFVTTCTDVGLCKKRPKPGGWNTGGSRYPGQGSPGGNRYPPQSGGTWGQPHGGGWGQPHGGGWGQPHGGGWGQPHGGGWSQGGGTHNQWNKPSKPKTNLKHVAGAAAAGAVVGGLGGYMLGSAMSRPMLHFGNDWEDRYYRENMYRYPNQVYYRPVDQYSNQNNFVHDCVNITIKQHTVTTTTKGENFTETDVKMMERVVEQMCVTQYQKESQAYYDGRRSSAVLFSSPPVILLISFLIFLIVG.

A signal peptide spans 1–28; the sequence is MANLGYWLLALFVTTCTDVGLCKKRPKP. The interval 23-38 is interaction with ADGRG6; that stretch reads KKRPKPGGWNTGGSRY. An interaction with GRB2, ERI3 and SYN1 region spans residues 23-231; that stretch reads KKRPKPGGWN…SQAYYDGRRS (209 aa). The interval 24–107 is disordered; the sequence is KRPKPGGWNT…QWNKPSKPKT (84 aa). A run of 5 repeats spans residues 51–59, 60–67, 68–75, 76–83, and 84–91. The tract at residues 51 to 91 is 5 X 8 AA tandem repeats of P-H-G-G-G-W-G-Q; that stretch reads PQSGGTWGQPHGGGWGQPHGGGWGQPHGGGWGQPHGGGWSQ. Gly residues predominate over residues 55–95; the sequence is GTWGQPHGGGWGQPHGGGWGQPHGGGWGQPHGGGWSQGGGT. Positions 61, 62, 63, 69, 70, 71, 77, 78, 79, 85, 86, and 87 each coordinate Cu(2+). Cys-179 and Cys-214 form a disulfide bridge. Residues Asn-181 and Asn-197 are each glycosylated (N-linked (GlcNAc...) asparagine). Ser-231 is lipidated: GPI-anchor amidated serine. The propeptide at 232-254 is removed in mature form; sequence SAVLFSSPPVILLISFLIFLIVG.

Belongs to the prion family. Monomer and homodimer. Has a tendency to aggregate into amyloid fibrils containing a cross-beta spine, formed by a steric zipper of superposed beta-strands. Soluble oligomers may represent an intermediate stage on the path to fibril formation. Copper binding may promote oligomerization. Interacts with GRB2, APP, ERI3/PRNPIP and SYN1. Mislocalized cytosolically exposed PrP interacts with MGRN1; this interaction alters MGRN1 subcellular location and causes lysosomal enlargement. Interacts with APP. Interacts with KIAA1191. Interacts with ADGRG6.

Its subcellular location is the cell membrane. It is found in the golgi apparatus. In terms of biological role, its primary physiological function is unclear. May play a role in neuronal development and synaptic plasticity. May be required for neuronal myelin sheath maintenance. May promote myelin homeostasis through acting as an agonist for ADGRG6 receptor. May play a role in iron uptake and iron homeostasis. Soluble oligomers are toxic to cultured neuroblastoma cells and induce apoptosis (in vitro). Association with GPC1 (via its heparan sulfate chains) targets PRNP to lipid rafts. Also provides Cu(2+) or Zn(2+) for the ascorbate-mediated GPC1 deaminase degradation of its heparan sulfate side chains. The polypeptide is Major prion protein (Prnp) (Rattus norvegicus (Rat)).